Consider the following 466-residue polypeptide: Soluble pyridine nucleotide transhydrogenase (466 aa).

Position 36–45 (36–45 (EKESSVGGGC)) interacts with FAD.

Belongs to the class-I pyridine nucleotide-disulfide oxidoreductase family. FAD is required as a cofactor.

It localises to the cytoplasm. The enzyme catalyses NAD(+) + NADPH = NADH + NADP(+). Functionally, conversion of NADPH, generated by peripheral catabolic pathways, to NADH, which can enter the respiratory chain for energy generation. The chain is Soluble pyridine nucleotide transhydrogenase from Vibrio atlanticus (strain LGP32) (Vibrio splendidus (strain Mel32)).